The chain runs to 222 residues: MYAVFGLTRSEVTPHEAAAARYKHRGVIDRQGAAMTSRRAPDGGLNLDDFMRRQRGRHLDLPYPRGYTLFVCDVEETILTPRDVEYWKLLVVTQGQLRVIGTIGLANLFSWDRSVAGVAADGSVLCYEISRENFVVRAADSLPQLLERGLLHSYFEDVERAAQGRLRHGNRSGLRRDADGQVIRESACYVSRVLLRHRVTPGKQEITDAMFEAGNVPSALLP.

This sequence belongs to the herpesviridae US22 family. As to quaternary structure, interacts with UL25. Interacts with ISGylation machinery components ISG15, UBA7 and HERC5; these interactions inhibit global protein ISGylation. Post-translationally, ISGylated; ISGylation regulates UL26 stability and inhibits its activities to suppress NF-kappa-B signaling.

The protein resides in the virion tegument. It localises to the host nucleus. Functionally, plays a role in the inhibition of host NF-kappa-B. This inhibition affects both the canonical and the non-canonical pathways. Blocks the induction of host IKK phosphorylation. May also influence the normal phosphorylation state of several tegument proteins including pp28 in virions. Also suppresses virus-induced ISGylation independent of its own ISGylation. The polypeptide is Tegument protein UL26 (UL26) (Homo sapiens (Human)).